The chain runs to 308 residues: N-acetylmuramic acid 6-phosphate etherase (308 aa).

The SIS domain maps to I62 to K225. Catalysis depends on E90, which acts as the Proton donor. The active site involves E121.

This sequence belongs to the GCKR-like family. MurNAc-6-P etherase subfamily. As to quaternary structure, homodimer.

The enzyme catalyses N-acetyl-D-muramate 6-phosphate + H2O = N-acetyl-D-glucosamine 6-phosphate + (R)-lactate. The protein operates within amino-sugar metabolism; 1,6-anhydro-N-acetylmuramate degradation. Its pathway is amino-sugar metabolism; N-acetylmuramate degradation. It participates in cell wall biogenesis; peptidoglycan recycling. Functionally, specifically catalyzes the cleavage of the D-lactyl ether substituent of MurNAc 6-phosphate, producing GlcNAc 6-phosphate and D-lactate. Together with AnmK, is also required for the utilization of anhydro-N-acetylmuramic acid (anhMurNAc) either imported from the medium or derived from its own cell wall murein, and thus plays a role in cell wall recycling. In Vibrio campbellii (strain ATCC BAA-1116), this protein is N-acetylmuramic acid 6-phosphate etherase.